A 339-amino-acid polypeptide reads, in one-letter code: DNA-directed RNA polymerase subunit alpha (339 aa).

Residues 1 to 233 (MVREEVAGST…DLFLPFLHAE (233 aa)) form an alpha N-terminal domain (alpha-NTD) region. Residues 264-339 (KKGIPLNCIF…IDLLKNKLSF (76 aa)) are alpha C-terminal domain (alpha-CTD).

It belongs to the RNA polymerase alpha chain family. As to quaternary structure, in plastids the minimal PEP RNA polymerase catalytic core is composed of four subunits: alpha, beta, beta', and beta''. When a (nuclear-encoded) sigma factor is associated with the core the holoenzyme is formed, which can initiate transcription.

It is found in the plastid. The protein resides in the chloroplast. It carries out the reaction RNA(n) + a ribonucleoside 5'-triphosphate = RNA(n+1) + diphosphate. In terms of biological role, DNA-dependent RNA polymerase catalyzes the transcription of DNA into RNA using the four ribonucleoside triphosphates as substrates. This Elymus californicus (California bottlebrush grass) protein is DNA-directed RNA polymerase subunit alpha.